The primary structure comprises 257 residues: Methylthioribulose-1-phosphate dehydratase (257 aa).

The interval 1–33 (MVSSQEKMASISDIIQKDEDSGSEKTESQDKEH) is disordered. The span at 15 to 33 (IQKDEDSGSEKTESQDKEH) shows a compositional bias: basic and acidic residues. Cys-107 serves as a coordination point for substrate. His-125 and His-127 together coordinate Zn(2+). Glu-149 acts as the Proton donor/acceptor in catalysis. Residue His-205 participates in Zn(2+) binding.

This sequence belongs to the aldolase class II family. MtnB subfamily. Requires Zn(2+) as cofactor.

It localises to the cytoplasm. The enzyme catalyses 5-(methylsulfanyl)-D-ribulose 1-phosphate = 5-methylsulfanyl-2,3-dioxopentyl phosphate + H2O. It participates in amino-acid biosynthesis; L-methionine biosynthesis via salvage pathway; L-methionine from S-methyl-5-thio-alpha-D-ribose 1-phosphate: step 2/6. Its function is as follows. Catalyzes the dehydration of methylthioribulose-1-phosphate (MTRu-1-P) into 2,3-diketo-5-methylthiopentyl-1-phosphate (DK-MTP-1-P). Functions in the methionine salvage pathway. May play a role in apoptosis. This is Methylthioribulose-1-phosphate dehydratase from Esox lucius (Northern pike).